A 179-amino-acid polypeptide reads, in one-letter code: Protein GrpE (179 aa).

The interval 1–20 (MSEETKEEIKNEKVDEEVTE) is disordered.

This sequence belongs to the GrpE family. Homodimer.

It is found in the cytoplasm. In terms of biological role, participates actively in the response to hyperosmotic and heat shock by preventing the aggregation of stress-denatured proteins, in association with DnaK and GrpE. It is the nucleotide exchange factor for DnaK and may function as a thermosensor. Unfolded proteins bind initially to DnaJ; upon interaction with the DnaJ-bound protein, DnaK hydrolyzes its bound ATP, resulting in the formation of a stable complex. GrpE releases ADP from DnaK; ATP binding to DnaK triggers the release of the substrate protein, thus completing the reaction cycle. Several rounds of ATP-dependent interactions between DnaJ, DnaK and GrpE are required for fully efficient folding. This chain is Protein GrpE, found in Lactococcus lactis subsp. lactis (strain IL1403) (Streptococcus lactis).